The following is a 218-amino-acid chain: Outer-membrane lipoprotein LolB (218 aa).

Residues 1 to 24 (MNNLSYLTKIPLIWVLLSVTLLSA) form the signal peptide. Residue cysteine 25 is the site of N-palmitoyl cysteine attachment. Cysteine 25 carries the S-diacylglycerol cysteine lipid modification.

It belongs to the LolB family. In terms of assembly, monomer.

The protein localises to the cell outer membrane. Its function is as follows. Plays a critical role in the incorporation of lipoproteins in the outer membrane after they are released by the LolA protein. The sequence is that of Outer-membrane lipoprotein LolB from Shewanella sediminis (strain HAW-EB3).